Consider the following 249-residue polypeptide: 2,3-bisphosphoglycerate-dependent phosphoglycerate mutase (249 aa).

Substrate-binding positions include 8-15, 21-22, arginine 60, 87-90, lysine 98, 114-115, and 183-184; these read RHGESAWN, TG, ERHY, RR, and GN. The Tele-phosphohistidine intermediate role is filled by histidine 9. Glutamate 87 (proton donor/acceptor) is an active-site residue.

The protein belongs to the phosphoglycerate mutase family. BPG-dependent PGAM subfamily.

The enzyme catalyses (2R)-2-phosphoglycerate = (2R)-3-phosphoglycerate. It participates in carbohydrate degradation; glycolysis; pyruvate from D-glyceraldehyde 3-phosphate: step 3/5. Catalyzes the interconversion of 2-phosphoglycerate and 3-phosphoglycerate. The polypeptide is 2,3-bisphosphoglycerate-dependent phosphoglycerate mutase (Methanosphaerula palustris (strain ATCC BAA-1556 / DSM 19958 / E1-9c)).